The following is a 34-amino-acid chain: METNDLGFVASLMFILVPAIFLIVLYIGTQNNEA.

The chain crosses the membrane as a helical span at residues 7-27; the sequence is GFVASLMFILVPAIFLIVLYI.

This sequence belongs to the PsbM family. As to quaternary structure, PSII is composed of 1 copy each of membrane proteins PsbA, PsbB, PsbC, PsbD, PsbE, PsbF, PsbH, PsbI, PsbJ, PsbK, PsbL, PsbM, PsbT, PsbX, PsbY, PsbZ, Psb30/Ycf12, peripheral proteins PsbO, CyanoQ (PsbQ), PsbU, PsbV and a large number of cofactors. It forms dimeric complexes.

It is found in the cellular thylakoid membrane. In terms of biological role, one of the components of the core complex of photosystem II (PSII). PSII is a light-driven water:plastoquinone oxidoreductase that uses light energy to abstract electrons from H(2)O, generating O(2) and a proton gradient subsequently used for ATP formation. It consists of a core antenna complex that captures photons, and an electron transfer chain that converts photonic excitation into a charge separation. This subunit is found at the monomer-monomer interface. This chain is Photosystem II reaction center protein M, found in Synechococcus sp. (strain CC9605).